The sequence spans 392 residues: Antitrypsin (392 aa).

Residues 1-16 form the signal peptide; the sequence is MKTIICLFTIAIAAMA.

This sequence belongs to the serpin family. As to expression, hemolymph.

It localises to the secreted. Its function is as follows. May play a role in the prophenoloxidase activating system in the silkworm hemolymph. This Bombyx mori (Silk moth) protein is Antitrypsin.